Reading from the N-terminus, the 397-residue chain is Elongation factor Tu (397 aa).

One can recognise a tr-type G domain in the interval 10–206 (KPHVNIGTIG…AVDDSIPEPQ (197 aa)). The segment at 19 to 26 (GHIDHGKT) is G1. 19-26 (GHIDHGKT) lines the GTP pocket. T26 is a binding site for Mg(2+). Positions 62–66 (GITIS) are G2. The segment at 83 to 86 (DCPG) is G3. Residues 83–87 (DCPGH) and 138–141 (NKAD) contribute to the GTP site. The interval 138–141 (NKAD) is G4. The interval 176-178 (SAL) is G5.

The protein belongs to the TRAFAC class translation factor GTPase superfamily. Classic translation factor GTPase family. EF-Tu/EF-1A subfamily. In terms of assembly, monomer.

Its subcellular location is the cytoplasm. The catalysed reaction is GTP + H2O = GDP + phosphate + H(+). In terms of biological role, GTP hydrolase that promotes the GTP-dependent binding of aminoacyl-tRNA to the A-site of ribosomes during protein biosynthesis. This is Elongation factor Tu from Frankia alni (strain DSM 45986 / CECT 9034 / ACN14a).